Here is a 324-residue protein sequence, read N- to C-terminus: 2-dehydro-3-deoxygluconokinase (324 aa).

Residues 35 to 39, 106 to 108, and arginine 170 contribute to the substrate site; these read GAESN and YYR. ATP contacts are provided by residues 168–170, 228–233, and 258–261; these read NVR, KLGKEG, and GAGD. Substrate-binding residues include aspartate 261 and aspartate 297. The active-site Proton acceptor is the aspartate 261.

Belongs to the carbohydrate kinase PfkB family.

It catalyses the reaction 2-dehydro-3-deoxy-D-gluconate + ATP = 2-dehydro-3-deoxy-6-phospho-D-gluconate + ADP + H(+). It functions in the pathway carbohydrate acid metabolism; 2-dehydro-3-deoxy-D-gluconate degradation; D-glyceraldehyde 3-phosphate and pyruvate from 2-dehydro-3-deoxy-D-gluconate: step 1/2. Its function is as follows. Catalyzes the phosphorylation of 2-keto-3-deoxygluconate (KDG) to produce 2-keto-3-deoxy-6-phosphogluconate (KDPG). The sequence is that of 2-dehydro-3-deoxygluconokinase (kdgK) from Bacillus subtilis (strain 168).